The primary structure comprises 397 residues: Probable pyruvate dehydrogenase E1 component subunit alpha, mitochondrial (397 aa).

The pyruvate site is built by His-86, Tyr-112, Arg-113, Gly-159, Val-161, Asp-190, Gly-191, Ala-192, and Asn-219. 9 residues coordinate thiamine diphosphate: Tyr-112, Arg-113, Gly-159, Val-161, Asp-190, Gly-191, Ala-192, Asn-219, and His-286. Residue Asp-190 participates in Mg(2+) binding. Asn-219 provides a ligand contact to Mg(2+).

As to quaternary structure, tetramer of 2 alpha and 2 beta subunits. Requires thiamine diphosphate as cofactor. It depends on Mg(2+) as a cofactor.

The protein resides in the mitochondrion matrix. It carries out the reaction N(6)-[(R)-lipoyl]-L-lysyl-[protein] + pyruvate + H(+) = N(6)-[(R)-S(8)-acetyldihydrolipoyl]-L-lysyl-[protein] + CO2. E1 activity is regulated by phosphorylation (inactivation) and dephosphorylation (activation) of the alpha subunit. Functionally, the pyruvate dehydrogenase complex catalyzes the overall conversion of pyruvate to acetyl-CoA and CO(2). It contains multiple copies of three enzymatic components: pyruvate dehydrogenase (E1), dihydrolipoamide acetyltransferase (E2) and lipoamide dehydrogenase (E3). This Caenorhabditis elegans protein is Probable pyruvate dehydrogenase E1 component subunit alpha, mitochondrial.